The primary structure comprises 268 residues: Type III pantothenate kinase (268 aa).

Residue 18–25 (DIGNTTTT) participates in ATP binding. Substrate-binding positions include Tyr108 and 115–118 (GADR). The Proton acceptor role is filled by Asp117. Asp138 contacts K(+). An ATP-binding site is contributed by Thr141. Thr193 is a substrate binding site.

Belongs to the type III pantothenate kinase family. In terms of assembly, homodimer. The cofactor is NH4(+). Requires K(+) as cofactor.

It is found in the cytoplasm. The catalysed reaction is (R)-pantothenate + ATP = (R)-4'-phosphopantothenate + ADP + H(+). The protein operates within cofactor biosynthesis; coenzyme A biosynthesis; CoA from (R)-pantothenate: step 1/5. Functionally, catalyzes the phosphorylation of pantothenate (Pan), the first step in CoA biosynthesis. In Chlorobaculum parvum (strain DSM 263 / NCIMB 8327) (Chlorobium vibrioforme subsp. thiosulfatophilum), this protein is Type III pantothenate kinase.